The chain runs to 227 residues: Ribose-5-phosphate isomerase A (227 aa).

Substrate is bound by residues 26-29, 82-85, and 95-98; these read TGST, DGAD, and KGGG. The Proton acceptor role is filled by Glu-104. Lys-122 lines the substrate pocket.

The protein belongs to the ribose 5-phosphate isomerase family. In terms of assembly, homodimer.

The enzyme catalyses aldehydo-D-ribose 5-phosphate = D-ribulose 5-phosphate. The protein operates within carbohydrate degradation; pentose phosphate pathway; D-ribose 5-phosphate from D-ribulose 5-phosphate (non-oxidative stage): step 1/1. Catalyzes the reversible conversion of ribose-5-phosphate to ribulose 5-phosphate. This chain is Ribose-5-phosphate isomerase A, found in Streptococcus equi subsp. equi (strain 4047).